The chain runs to 992 residues: Disks large-associated protein 1 (992 aa).

Disordered regions lie at residues 154–209 (SLEG…SWWS) and 355–375 (KAMGDEDSGDSDTSPKPSPKV). At S169 the chain carries Phosphoserine. The segment covering 195–209 (SNASNASPTSPSWWS) has biased composition (low complexity). 13 positions are modified to phosphoserine: S362, S365, S368, S372, S389, S418, S421, S425, S428, S437, S509, S516, and S578. T579 is modified (phosphothreonine). Phosphoserine occurs at positions 581 and 605. Residue T606 is modified to Phosphothreonine. Phosphoserine is present on residues S608 and S611. Interaction with DYL2 stretches follow at residues 665-676 (LSIGIQVDDAEE) and 687-698 (SKFQSVGVQVEE). A disordered region spans residues 914-980 (WKQMDPLDKK…QNSATESAES (67 aa)). 2 stretches are compositionally biased toward basic and acidic residues: residues 918 to 927 (DPLDKKERRA) and 943 to 958 (IRERSLESSQRQEARK). At S947 the chain carries Phosphoserine. The segment covering 969–978 (VRQNSATESA) has biased composition (polar residues). Positions 990–992 (TRL) match the PDZ-binding motif.

The protein belongs to the SAPAP family. Interacts with guanylate kinase-like domain of DLG1, DLG2, DLG3, DLG4 and AIP1. Interacts with the PDZ domain of SHANK1, SHANK2 and SHANK3. Found in a complex with DLG4 and SHANK1, SHANK2 or SHANK3. Found in a complex with DLG4 and BEGAIN. Interacts with DYL2 and LRFN1. Interacts with MPP2 (via the SH3-Guanylate kinase-like sub-module). In terms of processing, ubiquitinated by TRIM3; leading to proteasomal degradation. In terms of tissue distribution, expressed in brain and testis.

The protein resides in the cell membrane. It localises to the postsynaptic density. The protein localises to the synapse. Its function is as follows. Part of the postsynaptic scaffold in neuronal cells. This chain is Disks large-associated protein 1, found in Rattus norvegicus (Rat).